Consider the following 505-residue polypeptide: ATP synthase subunit alpha (505 aa).

169–176 (GDRQTGKT) serves as a coordination point for ATP.

This sequence belongs to the ATPase alpha/beta chains family. As to quaternary structure, F-type ATPases have 2 components, CF(1) - the catalytic core - and CF(0) - the membrane proton channel. CF(1) has five subunits: alpha(3), beta(3), gamma(1), delta(1), epsilon(1). CF(0) has three main subunits: a(1), b(2) and c(9-12). The alpha and beta chains form an alternating ring which encloses part of the gamma chain. CF(1) is attached to CF(0) by a central stalk formed by the gamma and epsilon chains, while a peripheral stalk is formed by the delta and b chains.

The protein localises to the cell membrane. The enzyme catalyses ATP + H2O + 4 H(+)(in) = ADP + phosphate + 5 H(+)(out). Produces ATP from ADP in the presence of a proton gradient across the membrane. The alpha chain is a regulatory subunit. This is ATP synthase subunit alpha from Clostridium acetobutylicum (strain ATCC 824 / DSM 792 / JCM 1419 / IAM 19013 / LMG 5710 / NBRC 13948 / NRRL B-527 / VKM B-1787 / 2291 / W).